The sequence spans 738 residues: Dipeptidyl peptidase 3 (738 aa).

Ala2 is subject to N-acetylalanine. His450 serves as a coordination point for Zn(2+). Glu451 is a catalytic residue. Zn(2+) contacts are provided by His455 and Glu508.

Belongs to the peptidase M49 family. Requires Zn(2+) as cofactor.

It is found in the cytoplasm. It carries out the reaction Release of an N-terminal dipeptide from a peptide comprising four or more residues, with broad specificity. Also acts on dipeptidyl 2-naphthylamides.. With respect to regulation, inhibited by spinorphin, an opioid peptide derived from hemoglobin. Cleaves and degrades bioactive peptides, including angiotensin, Leu-enkephalin and Met-enkephalin. Also cleaves Arg-Arg-beta-naphthylamide. This is Dipeptidyl peptidase 3 (Dpp3) from Rattus norvegicus (Rat).